The following is a 298-amino-acid chain: Nucleotide-binding protein MLBr00563 (298 aa).

21–28 lines the ATP pocket; that stretch reads GLSGAGRG. Residue 72-75 coordinates GTP; it reads DVRS.

It belongs to the RapZ-like family.

In terms of biological role, displays ATPase and GTPase activities. The chain is Nucleotide-binding protein MLBr00563 from Mycobacterium leprae (strain Br4923).